A 328-amino-acid chain; its full sequence is Anthranilate phosphoribosyltransferase (328 aa).

Residues glycine 79, 82 to 83 (GD), threonine 87, 89 to 92 (NIST), 107 to 115 (KHGNYAVSS), and serine 119 each bind 5-phospho-alpha-D-ribose 1-diphosphate. Glycine 79 provides a ligand contact to anthranilate. Serine 91 contacts Mg(2+). An anthranilate-binding site is contributed by asparagine 110. Arginine 165 is a binding site for anthranilate. Residues aspartate 223 and glutamate 224 each coordinate Mg(2+).

Belongs to the anthranilate phosphoribosyltransferase family. Homodimer. It depends on Mg(2+) as a cofactor.

The catalysed reaction is N-(5-phospho-beta-D-ribosyl)anthranilate + diphosphate = 5-phospho-alpha-D-ribose 1-diphosphate + anthranilate. The protein operates within amino-acid biosynthesis; L-tryptophan biosynthesis; L-tryptophan from chorismate: step 2/5. In terms of biological role, catalyzes the transfer of the phosphoribosyl group of 5-phosphorylribose-1-pyrophosphate (PRPP) to anthranilate to yield N-(5'-phosphoribosyl)-anthranilate (PRA). The protein is Anthranilate phosphoribosyltransferase of Cytophaga hutchinsonii (strain ATCC 33406 / DSM 1761 / CIP 103989 / NBRC 15051 / NCIMB 9469 / D465).